The chain runs to 396 residues: Acetate kinase (396 aa).

Asn8 serves as a coordination point for Mg(2+). Lys15 is a binding site for ATP. Arg89 provides a ligand contact to substrate. Asp146 acts as the Proton donor/acceptor in catalysis. Residues 206-210, 283-285, and 331-335 contribute to the ATP site; these read HIGNG, DMR, and GMGEN. Position 383 (Glu383) interacts with Mg(2+).

Belongs to the acetokinase family. In terms of assembly, homodimer. Mg(2+) is required as a cofactor. It depends on Mn(2+) as a cofactor.

The protein resides in the cytoplasm. It catalyses the reaction acetate + ATP = acetyl phosphate + ADP. The protein operates within metabolic intermediate biosynthesis; acetyl-CoA biosynthesis; acetyl-CoA from acetate: step 1/2. Functionally, catalyzes the formation of acetyl phosphate from acetate and ATP. Can also catalyze the reverse reaction. The chain is Acetate kinase from Streptococcus uberis (strain ATCC BAA-854 / 0140J).